The chain runs to 499 residues: Glycerol kinase (499 aa).

Thr12 provides a ligand contact to ADP. ATP is bound by residues Thr12, Thr13, and Ser14. Sn-glycerol 3-phosphate is bound at residue Thr12. ADP is bound at residue Arg16. Residues Arg82, Glu83, Tyr134, and Asp243 each coordinate sn-glycerol 3-phosphate. Residues Arg82, Glu83, Tyr134, Asp243, and Gln244 each contribute to the glycerol site. Positions 265 and 308 each coordinate ADP. Positions 265, 308, 312, and 411 each coordinate ATP. Gly411 contributes to the ADP binding site.

The protein belongs to the FGGY kinase family.

The enzyme catalyses glycerol + ATP = sn-glycerol 3-phosphate + ADP + H(+). The protein operates within polyol metabolism; glycerol degradation via glycerol kinase pathway; sn-glycerol 3-phosphate from glycerol: step 1/1. With respect to regulation, inhibited by fructose 1,6-bisphosphate (FBP). Its function is as follows. Key enzyme in the regulation of glycerol uptake and metabolism. Catalyzes the phosphorylation of glycerol to yield sn-glycerol 3-phosphate. The chain is Glycerol kinase from Agrobacterium fabrum (strain C58 / ATCC 33970) (Agrobacterium tumefaciens (strain C58)).